The primary structure comprises 125 residues: uncharacterized protein (125 aa).

A chloroplast-targeting transit peptide spans 1 to 46 (MFFDTKVLNYPTIHKSISMASTMQRTSSSAASNERQLSQLQRRAPS).

The protein resides in the plastid. Its subcellular location is the chloroplast. This is an uncharacterized protein from Arabidopsis thaliana (Mouse-ear cress).